The following is a 207-amino-acid chain: Non-structural protein 5 (207 aa).

The DRBM domain occupies 2–69 (DPVSVVHSFA…CVLISNDLKE (68 aa)).

This is Non-structural protein 5 (Segment-12) from Banna virus (BAV).